Reading from the N-terminus, the 345-residue chain is Phosphoribosylformylglycinamidine cyclo-ligase (345 aa).

Belongs to the AIR synthase family.

Its subcellular location is the cytoplasm. The enzyme catalyses 2-formamido-N(1)-(5-O-phospho-beta-D-ribosyl)acetamidine + ATP = 5-amino-1-(5-phospho-beta-D-ribosyl)imidazole + ADP + phosphate + H(+). It functions in the pathway purine metabolism; IMP biosynthesis via de novo pathway; 5-amino-1-(5-phospho-D-ribosyl)imidazole from N(2)-formyl-N(1)-(5-phospho-D-ribosyl)glycinamide: step 2/2. This chain is Phosphoribosylformylglycinamidine cyclo-ligase, found in Synechococcus sp. (strain CC9902).